Consider the following 262-residue polypeptide: Carbohydrate deacetylase (262 aa).

Residue histidine 129 participates in Mg(2+) binding.

The protein belongs to the YdjC deacetylase family. As to quaternary structure, homodimer. Mg(2+) is required as a cofactor.

Probably catalyzes the deacetylation of acetylated carbohydrates an important step in the degradation of oligosaccharides. The sequence is that of Carbohydrate deacetylase from Enterococcus faecalis (strain ATCC 700802 / V583).